A 685-amino-acid chain; its full sequence is Probable transketolase (685 aa).

Residue H32 participates in substrate binding. Thiamine diphosphate is bound by residues H72 and 121-123 (GPL). D162 contacts Mg(2+). Residues G163 and N192 each coordinate thiamine diphosphate. Mg(2+) contacts are provided by N192 and I194. Residues H268, R363, and S390 each coordinate substrate. Residue H268 participates in thiamine diphosphate binding. Residues E422 and F448 each coordinate thiamine diphosphate. E422 serves as the catalytic Proton donor. Residues H472, D480, and R531 each coordinate substrate.

The protein belongs to the transketolase family. In terms of assembly, homodimer. The cofactor is Mg(2+). Requires Ca(2+) as cofactor. Mn(2+) is required as a cofactor. Co(2+) serves as cofactor. It depends on thiamine diphosphate as a cofactor.

It carries out the reaction D-sedoheptulose 7-phosphate + D-glyceraldehyde 3-phosphate = aldehydo-D-ribose 5-phosphate + D-xylulose 5-phosphate. Functionally, catalyzes the transfer of a two-carbon ketol group from a ketose donor to an aldose acceptor, via a covalent intermediate with the cofactor thiamine pyrophosphate. This chain is Probable transketolase, found in Schizosaccharomyces pombe (strain 972 / ATCC 24843) (Fission yeast).